The primary structure comprises 647 residues: Putative ankyrin repeat protein L764 (647 aa).

9 ANK repeats span residues 123–154, 202–231, 233–256, 258–284, 289–319, 348–377, 401–431, 529–558, and 588–617; these read LKDR…QINL, LTQE…EYDL, EIIN…SLNE, NVNI…TINS, SMFS…DLTV, DCNL…DLKK, NDVN…NIDL, FILK…DNNE, and NGQN…DVKN.

The polypeptide is Putative ankyrin repeat protein L764 (Acanthamoeba polyphaga (Amoeba)).